The following is a 114-amino-acid chain: Nucleoid-associated protein PCC8801_2554 (114 aa).

Belongs to the YbaB/EbfC family. As to quaternary structure, homodimer.

It is found in the cytoplasm. Its subcellular location is the nucleoid. In terms of biological role, binds to DNA and alters its conformation. May be involved in regulation of gene expression, nucleoid organization and DNA protection. This chain is Nucleoid-associated protein PCC8801_2554, found in Rippkaea orientalis (strain PCC 8801 / RF-1) (Cyanothece sp. (strain PCC 8801)).